The chain runs to 639 residues: Chaperone protein DnaK (639 aa).

At T198 the chain carries Phosphothreonine; by autocatalysis. Residues 603 to 618 (AKAQTQGGAQEGAAKQ) show a composition bias toward low complexity. Residues 603-639 (AKAQTQGGAQEGAAKQSNATADDVVDAEFEEVKDDKK) are disordered. A compositionally biased stretch (acidic residues) spans 625 to 639 (DVVDAEFEEVKDDKK).

This sequence belongs to the heat shock protein 70 family.

Functionally, acts as a chaperone. This is Chaperone protein DnaK from Shewanella sp. (strain MR-4).